The sequence spans 463 residues: Hydroxyacid-oxoacid transhydrogenase, mitochondrial (463 aa).

It belongs to the iron-containing alcohol dehydrogenase family. Hydroxyacid-oxoacid transhydrogenase subfamily.

Its subcellular location is the mitochondrion. It carries out the reaction (S)-3-hydroxybutanoate + 2-oxoglutarate = (R)-2-hydroxyglutarate + acetoacetate. The catalysed reaction is 4-hydroxybutanoate + 2-oxoglutarate = (R)-2-hydroxyglutarate + succinate semialdehyde. Catalyzes the cofactor-independent reversible oxidation of gamma-hydroxybutyrate (GHB) to succinic semialdehyde (SSA) coupled to reduction of 2-ketoglutarate (2-KG) to D-2-hydroxyglutarate (D-2-HG). L-3-hydroxybutyrate (L-3-OHB) is also a substrate for HOT when using 2-KG as hydrogen acceptor, resulting in the formation of D-2-HG. The sequence is that of Hydroxyacid-oxoacid transhydrogenase, mitochondrial (adhfe1) from Xenopus tropicalis (Western clawed frog).